The following is a 364-amino-acid chain: Putative agmatine deiminase (364 aa).

Cysteine 355 serves as the catalytic Amidino-cysteine intermediate.

The protein belongs to the agmatine deiminase family.

The catalysed reaction is agmatine + H2O = N-carbamoylputrescine + NH4(+). This chain is Putative agmatine deiminase, found in Mycoplasma mycoides subsp. mycoides SC (strain CCUG 32753 / NCTC 10114 / PG1).